Reading from the N-terminus, the 223-residue chain is DNA mismatch repair protein MutH (223 aa).

It belongs to the MutH family.

The protein localises to the cytoplasm. In terms of biological role, sequence-specific endonuclease that cleaves unmethylated GATC sequences. It is involved in DNA mismatch repair. This chain is DNA mismatch repair protein MutH, found in Shewanella baltica (strain OS185).